The sequence spans 310 residues: Haloalkane dehalogenase (310 aa).

The region spanning 49-295 (VFLCLHGEPT…DAGHFVQEFG (247 aa)) is the AB hydrolase-1 domain. The active-site Nucleophile is the aspartate 124. Chloride contacts are provided by tryptophan 125 and tryptophan 175. Aspartate 260 (proton donor) is an active-site residue. Catalysis depends on histidine 289, which acts as the Proton acceptor.

It belongs to the haloalkane dehalogenase family. Type 1 subfamily. In terms of assembly, monomer.

It catalyses the reaction 1-haloalkane + H2O = a halide anion + a primary alcohol + H(+). The catalysed reaction is 1,2-dichloroethane + H2O = 2-chloroethanol + chloride + H(+). The protein operates within xenobiotic degradation; 1,2-dichloroethane degradation; glycolate from 1,2-dichloroethane: step 1/4. Inhibited by thiol reagents such as p-chloromercuribenzoate and iodoacetamide. Functionally, catalyzes hydrolytic cleavage of carbon-halogen bonds in halogenated aliphatic compounds, leading to the formation of the corresponding primary alcohols, halide ions and protons. Has a broad substrate specificity, which includes terminally mono- and di- chlorinated and brominated alkanes (up to C4 only). The highest activity was found with 1,2-dichloroethane, 1,3-dichloropropane, and 1,2-dibromoethane. This is Haloalkane dehalogenase (dhlA) from Xanthobacter autotrophicus.